A 277-amino-acid polypeptide reads, in one-letter code: ATP synthase subunit delta (277 aa).

The protein belongs to the ATPase delta chain family. As to quaternary structure, F-type ATPases have 2 components, F(1) - the catalytic core - and F(0) - the membrane proton channel. F(1) has five subunits: alpha(3), beta(3), gamma(1), delta(1), epsilon(1). F(0) has three main subunits: a(1), b(2) and c(10-14). The alpha and beta chains form an alternating ring which encloses part of the gamma chain. F(1) is attached to F(0) by a central stalk formed by the gamma and epsilon chains, while a peripheral stalk is formed by the delta and b chains.

Its subcellular location is the cell membrane. In terms of biological role, f(1)F(0) ATP synthase produces ATP from ADP in the presence of a proton or sodium gradient. F-type ATPases consist of two structural domains, F(1) containing the extramembraneous catalytic core and F(0) containing the membrane proton channel, linked together by a central stalk and a peripheral stalk. During catalysis, ATP synthesis in the catalytic domain of F(1) is coupled via a rotary mechanism of the central stalk subunits to proton translocation. This protein is part of the stalk that links CF(0) to CF(1). It either transmits conformational changes from CF(0) to CF(1) or is implicated in proton conduction. The chain is ATP synthase subunit delta from Frankia alni (strain DSM 45986 / CECT 9034 / ACN14a).